Here is a 692-residue protein sequence, read N- to C-terminus: MIGGDTRAASAHPGMASAQGPVATPSPEQPFPGTTSVSLARPVLRVWHGAHSSGLLPNLIAQHSPAMAQNGAVPSEATKKDQNLTRGNWGNQIEFVLTSVGYAVGLGNVWRFPYLCYRNGGGAFMFPYFIMLIFCGIPLFFMELSFGQFASQGCLGVWRISPMFKGVGYGMMVVSTYIGIYYNVVICIAFYYFFSSMTHVLPWAYCNNPWNTPDCAGVLDASNLTNGSRPAALSGNLSHLFNYTLQRTSPSEEYWRLYVLKLSDDIGNFGEVRLPLLGCLGVSWVVVFLCLIRGVKSSGKVVYFTATFPYVVLTILFVRGVTLEGAFTGIMYYLTPQWDKILEAKVWGDAASQIFYSLGCAWGGLITMASYNKFHNNCYRDSVIISITNCATSVYAGFVIFSILGFMANHLGVDVSRVADHGPGLAFVAYPEALTLLPISPLWSLLFFFMLILLGLGTQFCLLETLVTAIVDEVGNEWILQKKTYVTLGVAVAGFLLGIPLTSQAGIYWLLLMDNYAASFSLVVISCIMCVSIMYIYGHRNYFQDIQMMLGFPPPLFFQICWRFVSPAIIFFILIFTVIQYRPITYNHYQYPGWAVAIGFLMALSSVICIPLYALFQLCRTDGDTLLQRLKNATKPSRDWGPALLEHRTGRYAPTTTPSPEDGFEVQPLHPDKAQIPIVGSNGSSRFQDSRI.

The segment at 1 to 34 is disordered; sequence MIGGDTRAASAHPGMASAQGPVATPSPEQPFPGT. Over 1–94 the chain is Cytoplasmic; sequence MIGGDTRAAS…TRGNWGNQIE (94 aa). 3 consecutive transmembrane segments (helical) span residues 95-115, 122-142, and 174-194; these read FVLTSVGYAVGLGNVWRFPYL, GAFMFPYFIMLIFCGIPLFFM, and VSTYIGIYYNVVICIAFYYFF. The Extracellular segment spans residues 195–271; that stretch reads SSMTHVLPWA…LSDDIGNFGE (77 aa). 9 helical membrane passes run 272 to 292, 301 to 321, 346 to 366, 393 to 413, 436 to 456, 492 to 512, 516 to 536, 556 to 576, and 596 to 616; these read VRLPLLGCLGVSWVVVFLCLI, VVYFTATFPYVVLTILFVRGV, VWGDAASQIFYSLGCAWGGLI, SVYAGFVIFSILGFMANHLGV, LLPISPLWSLLFFFMLILLGL, VAGFLLGIPLTSQAGIYWLLL, YAASFSLVVISCIMCVSIMYI, LFFQICWRFVSPAIIFFILIF, and VAIGFLMALSSVICIPLYALF. Over 617-692 the chain is Cytoplasmic; sequence QLCRTDGDTL…GSSRFQDSRI (76 aa). Threonine 657 carries the phosphothreonine modification. Residues serine 659 and serine 684 each carry the phosphoserine modification. Residues 681–692 form an essential for interaction with EXOC1 region; sequence SNGSSRFQDSRI.

This sequence belongs to the sodium:neurotransmitter symporter (SNF) (TC 2.A.22) family. SLC6A9 subfamily. In terms of assembly, interacts with EXOC1; interaction increases the transporter capacity of SLC6A9 probably by promoting its insertion into the cell membrane. Interacts with EXOC3 and EXOC4. Expressed in the brain (at protein level). At 11 dpc, expressed in the ventral part of the ventricular zone. At 15 dpc, also expressed in adjacent mantle tissue and the meninges. Strongly expressed in 12 dpc and 15 dpc liver. In terms of tissue distribution, expressed in the brain.

It is found in the cell membrane. It carries out the reaction glycine(out) + chloride(out) + 2 Na(+)(out) = glycine(in) + chloride(in) + 2 Na(+)(in). In terms of biological role, sodium- and chloride-dependent glycine transporter which is essential for regulating glycine concentrations at inhibitory glycinergic synapses. Its function is as follows. Sodium- and chloride-dependent glycine transporter. This is Sodium- and chloride-dependent glycine transporter 1 (Slc6a9) from Mus musculus (Mouse).